Here is a 147-residue protein sequence, read N- to C-terminus: Protein YjdN (147 aa).

In Escherichia coli (strain K12), this protein is Protein YjdN (yjdN).